The chain runs to 181 residues: Crustacyanin-C1 subunit (181 aa).

Disulfide bonds link Cys-12/Cys-121, Cys-51/Cys-173, and Cys-117/Cys-150.

This sequence belongs to the calycin superfamily. Lipocalin family. As to quaternary structure, oligomer; Can form dimers (beta-crustacyanin); or complexes of 16 subunits (alpha-crustacyanin). There are five types of subunits: A1, A2, A3, C1 and C2. Found in the carapace.

It localises to the secreted. Its subcellular location is the extracellular space. Functionally, binds the carotenoid astaxanthin (AXT) which provides the blue coloration to the carapace of the lobster. The protein is Crustacyanin-C1 subunit of Homarus gammarus (European lobster).